The chain runs to 359 residues: MAAVRTPLSLWRFQLGSRRARRVCTRATAQRHPDALLATRPQPFEVGQPRRLLSSEAESGSSEVKKPAFMDEEVQRILTKITGLDLQKTFRPAIQPLKPPTYKLMTQAQLEEATRLAVEAAKVRLKMPPVLEERKPINDVLAEDKILEGTETNKYVFTDISYNIPHRERFIVVREPSGTLRKASWEERDRVIQIYFPKEGRRVLPPVIFKDENLKTMYSQDRHADVLNLCVAQFEPDSAEYIKVHHQTYEDIDRHGKYELLRSTRHFGGMAWYFVNKKKIDGLLIDQIQRDLVDDATSLVQLYHMLHPDGQSAQEAKEQAAEGVDLIKVFAKTEAQRGAYIELALQTYQEIVTSHSAAS.

The disordered stretch occupies residues 40–65 (RPQPFEVGQPRRLLSSEAESGSSEVK). S54 is modified (phosphoserine). The residue at position 210 (K210) is an N6-acetyllysine.

It belongs to the mitochondrion-specific ribosomal protein mS22 family. Component of the mitochondrial ribosome small subunit (28S) which comprises a 12S rRNA and about 30 distinct proteins.

Its subcellular location is the mitochondrion. The polypeptide is Small ribosomal subunit protein mS22 (Mrps22) (Mus musculus (Mouse)).